The sequence spans 139 residues: Large ribosomal subunit protein uL16 (139 aa).

This sequence belongs to the universal ribosomal protein uL16 family. In terms of assembly, part of the 50S ribosomal subunit.

Binds 23S rRNA and is also seen to make contacts with the A and possibly P site tRNAs. This is Large ribosomal subunit protein uL16 from Chlorobium chlorochromatii (strain CaD3).